We begin with the raw amino-acid sequence, 440 residues long: MTATWEKKEGNQGVLSVTVPAKKVDQAIDQAFKKVVKQVNIPGFRKGKVPRQIFEQRFGVEALYQDAVDILLPEAYGEAIEETGIKPVDQPEIEVNQIEKGKDLKFDATVTVQPEVKLGEYKGLEIEKQNADLTDEELQEAIDHSLGHLAEMVIKEDGSVEEGDTVNIDFDGYVDGEQFEGGQAESYDLEIGSGMFIPGFEEQLVGLKTGDEKDVKVTFPEEYHAEELAGKEATFKVKINEIKYKNVPELDDEIANELDSDADNVEEYKENLRKRLSEEKKVNAENVEKEEAINKAVNNAEVDIPEAMINNELDRMMQEFAQRIQQSGLNLETYFQISGQDESQLREQMKDDAEERVKTNLTLNAIANAEEVEATEEDIDKELEAMSTQFNISVEDIKKTLGSTDIVKDDVRVKKVIDLLLDDAKLVEPSEDAEEESEDK.

Positions 163–248 (GDTVNIDFDG…INEIKYKNVP (86 aa)) constitute a PPIase FKBP-type domain.

The protein belongs to the FKBP-type PPIase family. Tig subfamily.

Its subcellular location is the cytoplasm. The catalysed reaction is [protein]-peptidylproline (omega=180) = [protein]-peptidylproline (omega=0). Its function is as follows. Involved in protein export. Acts as a chaperone by maintaining the newly synthesized protein in an open conformation. Functions as a peptidyl-prolyl cis-trans isomerase. This chain is Trigger factor, found in Staphylococcus carnosus (strain TM300).